The chain runs to 2871 residues: Fibrillin-1 (2871 aa).

Positions 1–24 are cleaved as a signal peptide; that stretch reads MRRGRLLEIALGFTVLLASYTSHG. Positions 25–44 are excised as a propeptide; the sequence is ADANLEAGNVKETRASRAKR. Residues 45–81 are fibrillin unique N-terminal (FUN) domain; the sequence is RGGGGHDALKGPNVCGSRYNAYCCPGWKTLPGGNQCI. Positions 45 to 450 are N-terminal domain; the sequence is RGGGGHDALK…PPRVLPVNVT (406 aa). Intrachain disulfides connect Cys59–Cys68, Cys67–Cys80, Cys85–Cys94, Cys89–Cys100, Cys102–Cys111, Cys119–Cys129, Cys123–Cys134, Cys136–Cys145, Cys150–Cys160, Cys154–Cys166, and Cys168–Cys177. EGF-like domains are found at residues 81-112, 115-146, and 147-178; these read IVPI…PSCG, SIQH…THCG, and QPVC…PQCE. Positions 119–329 are interaction with MFAP4; the sequence is CNIRCMNGGS…YTSPDGTRCI (211 aa). Residues 184-236 enclose the TB 1 domain; it reads GPCFTVISNQMCQGQLSGIVCTKTLCCATVGRAWGHPCEMCPAQPHPCRRGFI. The hybrid domain 1 stretch occupies residues 195–221; that stretch reads CQGQLSGIVCTKTLCCATVGRAWGHPC. An EGF-like 4; calcium-binding domain is found at 246-287; sequence DVDECQAIPGLCQGGNCINTVGSFECKCPAGHKLNEVSQKCE. 6 disulfides stabilise this stretch: Cys250–Cys262, Cys257–Cys271, Cys273–Cys286, Cys292–Cys304, Cys299–Cys313, and Cys315–Cys328. A glycan (O-linked (Glc) serine) is linked at Ser268. Residues 288-329 form the EGF-like 5; calcium-binding domain; that stretch reads DIDECSTIPGICEGGECTNTVSSYFCKCPPGFYTSPDGTRCI. Positions 334-389 constitute a TB 2 domain; that stretch reads GYCYTALTNGRCSNQLPQSITKMQCCCDAGRCWSPGVTVAPEMCPIRATEDFNKLC. Asn448 is a glycosylation site (N-linked (GlcNAc...) asparagine). An EGF-like 6 domain is found at 449–489; that stretch reads VTDYCQLVRYLCQNGRCIPTPGSYRCECNKGFQLDLRGECI. Cystine bridges form between Cys453–Cys465, Cys460–Cys474, Cys476–Cys488, Cys494–Cys504, Cys499–Cys513, Cys515–Cys528, Cys534–Cys546, Cys541–Cys555, Cys557–Cys570, Cys576–Cys587, Cys582–Cys596, Cys598–Cys611, Cys617–Cys628, Cys623–Cys637, and Cys639–Cys652. O-linked (Glc) serine glycosylation occurs at Ser471. An EGF-like 7; calcium-binding domain is found at 490–529; the sequence is DVDECEKNPCAGGECINNQGSYTCQCRAGYQSTLTRTECR. O-linked (Glc) serine glycosylation is present at Ser510. Positions 530–571 constitute an EGF-like 8; calcium-binding domain; the sequence is DIDECLQNGRICNNGRCINTDGSFHCVCNAGFHVTRDGKNCE. O-linked (Glc) serine glycosylation occurs at Ser552. The 41-residue stretch at 572–612 folds into the EGF-like 9; calcium-binding domain; sequence DMDECSIRNMCLNGMCINEDGSFKCICKPGFQLASDGRYCK. O-linked (Glc) serine glycosylation occurs at Ser593. The 41-residue stretch at 613–653 folds into the EGF-like 10; calcium-binding domain; it reads DINECETPGICMNGRCVNTDGSYRCECFPGLAVGLDGRVCV. Ser634 is a glycosylation site (O-linked (Glc) serine). Residues 659–711 form the TB 3 domain; it reads STCYGGYKRGQCIKPLFGAVTKSECCCASTEYAFGEPCQPCPAQNSAEYQALC. Positions 723–764 constitute an EGF-like 11; calcium-binding domain; it reads DINECALDPDICPNGICENLRGTYKCICNSGYEVDSTGKNCV. Disulfide bonds link Cys727–Cys739, Cys734–Cys748, Cys750–Cys763, Cys769–Cys781, Cys776–Cys790, Cys792–Cys805, Cys811–Cys821, Cys816–Cys830, Cys832–Cys845, Cys853–Cys875, Cys862–Cys887, Cys876–Cys890, Cys896–Cys908, Cys914–Cys926, Cys921–Cys935, and Cys937–Cys950. The 42-residue stretch at 765–806 folds into the EGF-like 12; calcium-binding domain; the sequence is DINECVLNSLLCDNGQCRNTPGSFVCTCPKGFIYKPDLKTCE. O-linked (Glc) serine glycosylation is present at Ser787. An EGF-like 13; calcium-binding domain is found at 807 to 846; that stretch reads DIDECESSPCINGVCKNSPGSFICECSSESTLDPTKTICI. Ser827 carries an O-linked (Glc) serine glycan. Positions 851 to 902 constitute a TB 4 domain; it reads GTCWQTVIDGRCEININGATLKSQCCSSLGAAWGSPCTLCQVDPICGKGYSR. Residues 862 to 887 form a hybrid domain 2 region; it reads CEININGATLKSQCCSSLGAAWGSPC. The region spanning 910–951 is the EGF-like 14; calcium-binding domain; that stretch reads DIDECEVFPGVCKNGLCVNTRGSFKCQCPSGMTLDATGRICL. The 53-residue stretch at 956–1008 folds into the TB 5 domain; the sequence is ETCFLRYEDEECTLPIAGRHRMDACCCSVGAAWGTEECEECPMRNTPEYEELC. Positions 1028–1069 constitute an EGF-like 15; calcium-binding domain; the sequence is DINECKMIPSLCTHGKCRNTIGSFKCRCDSGFALDSEERNCT. 46 disulfide bridges follow: Cys1032–Cys1044, Cys1039–Cys1053, Cys1055–Cys1068, Cys1074–Cys1086, Cys1081–Cys1095, Cys1097–Cys1111, Cys1117–Cys1129, Cys1124–Cys1138, Cys1140–Cys1153, Cys1159–Cys1171, Cys1166–Cys1180, Cys1182–Cys1195, Cys1201–Cys1212, Cys1208–Cys1221, Cys1223–Cys1236, Cys1242–Cys1254, Cys1249–Cys1263, Cys1265–Cys1278, Cys1284–Cys1296, Cys1291–Cys1305, Cys1307–Cys1320, Cys1326–Cys1339, Cys1333–Cys1348, Cys1350–Cys1361, Cys1367–Cys1380, Cys1374–Cys1389, Cys1391–Cys1402, Cys1408–Cys1420, Cys1415–Cys1429, Cys1431–Cys1444, Cys1450–Cys1461, Cys1456–Cys1470, Cys1472–Cys1485, Cys1491–Cys1502, Cys1497–Cys1511, Cys1513–Cys1526, Cys1534–Cys1562, Cys1549–Cys1574, Cys1563–Cys1577, Cys1564–Cys1589, Cys1610–Cys1622, Cys1617–Cys1631, Cys1633–Cys1646, Cys1652–Cys1663, Cys1658–Cys1672, and Cys1674–Cys1687. Ser1050 is a glycosylation site (O-linked (Glc) serine). Asn1067 carries an N-linked (GlcNAc...) asparagine glycan. Residues 1070 to 1112 form the EGF-like 16; calcium-binding domain; the sequence is DIDECRISPDLCGRGQCVNTPGDFECKCDEGYESGFMMMKNCM. An EGF-like 17; calcium-binding domain is found at 1113–1154; it reads DIDECQRDPLLCRGGVCHNTEGSYRCECPPGHQLSPNISACI. O-linked (Glc) serine glycosylation is present at Ser1135. N-linked (GlcNAc...) asparagine glycosylation occurs at Asn1149. The EGF-like 18; calcium-binding domain maps to 1155–1196; sequence DINECELSAHLCPNGRCVNLIGKYQCACNPGYHSTPDRLFCV. The 41-residue stretch at 1197–1237 folds into the EGF-like 19; calcium-binding domain; it reads DIDECSIMNGGCETFCTNSEGSYECSCQPGFALMPDQRSCT. An O-linked (Glc) serine glycan is attached at Ser1218. Positions 1238 to 1279 constitute an EGF-like 20; calcium-binding domain; it reads DIDECEDNPNICDGGQCTNIPGEYRCLCYDGFMASEDMKTCV. Residues 1280-1321 enclose the EGF-like 21; calcium-binding domain; the sequence is DVNECDLNPNICLSGTCENTKGSFICHCDMGYSGKKGKTGCT. O-linked (Glc) serine glycosylation occurs at Ser1302. An EGF-like 22; calcium-binding domain is found at 1322–1362; that stretch reads DINECEIGAHNCGKHAVCTNTAGSFKCSCSPGWIGDGIKCT. O-linked (Glc) serine glycosylation is present at Ser1345. An EGF-like 23; calcium-binding domain is found at 1363 to 1403; the sequence is DLDECSNGTHMCSQHADCKNTMGSYRCLCKEGYTGDGFTCT. The N-linked (GlcNAc...) asparagine glycan is linked to Asn1369. O-linked (Glc) serine glycosylation occurs at Ser1386. Residues 1404–1445 form the EGF-like 24; calcium-binding domain; that stretch reads DLDECSENLNLCGNGQCLNAPGGYRCECDMGFVPSADGKACE. The 41-residue stretch at 1446-1486 folds into the EGF-like 25; calcium-binding domain; that stretch reads DIDECSLPNICVFGTCHNLPGLFRCECEIGYELDRSGGNCT. N-linked (GlcNAc...) asparagine glycosylation is present at Asn1484. The region spanning 1487-1527 is the EGF-like 26; calcium-binding domain; that stretch reads DVNECLDPTTCISGNCVNTPGSYICDCPPDFELNPTRVGCV. The O-linked (Glc) serine glycan is linked to Ser1508. Residues 1528–2731 are C-terminal domain; it reads DTRSGNCYLD…GYPKRGRKRR (1204 aa). The TB 6 domain occupies 1532-1589; that stretch reads GNCYLDIRPRGDNGDTACSNEIGVGVSKASCCCSLGKAWGTPCEMCPAVNTSEYKILC. The short motif at 1541 to 1543 is the Cell attachment site element; that stretch reads RGD. A glycan (N-linked (GlcNAc...) asparagine) is linked at Asn1581. The 42-residue stretch at 1606-1647 folds into the EGF-like 27; calcium-binding domain; the sequence is DIDECQELPGLCQGGKCINTFGSFQCRCPTGYYLNEDTRVCD. The O-linked (Glc) serine glycan is linked to Ser1628. Residues 1648–1688 form the EGF-like 28; calcium-binding domain; the sequence is DVNECETPGICGPGTCYNTVGNYTCICPPDYMQVNGGNNCM. The N-linked (GlcNAc...) asparagine glycan is linked to Asn1669. Residues 1693 to 1748 form the TB 7 domain; sequence SLCYRNYYADNQTCDGELLFNMTKKMCCCSYNIGRAWNKPCEQCPIPSTDEFATLC. N-linked (GlcNAc...) asparagine glycosylation is found at Asn1703 and Asn1713. Residues 1766-1807 enclose the EGF-like 29; calcium-binding domain; sequence DIDECREIPGVCENGVCINMVGSFRCECPVGFFYNDKLLVCE. Disulfide bonds link Cys1770/Cys1782, Cys1777/Cys1791, Cys1793/Cys1806, Cys1812/Cys1824, Cys1818/Cys1833, Cys1835/Cys1847, Cys1853/Cys1865, Cys1860/Cys1874, Cys1876/Cys1889, Cys1895/Cys1905, Cys1900/Cys1914, Cys1916/Cys1928, Cys1934/Cys1947, Cys1942/Cys1956, Cys1958/Cys1971, Cys1977/Cys1989, Cys1984/Cys1998, Cys2000/Cys2011, Cys2017/Cys2029, Cys2024/Cys2038, Cys2040/Cys2053, Cys2061/Cys2083, Cys2070/Cys2096, Cys2084/Cys2099, Cys2085/Cys2111, Cys2131/Cys2142, Cys2137/Cys2151, Cys2153/Cys2164, Cys2170/Cys2181, Cys2176/Cys2190, Cys2192/Cys2204, Cys2210/Cys2221, Cys2217/Cys2230, Cys2232/Cys2245, Cys2251/Cys2265, Cys2258/Cys2274, Cys2276/Cys2289, Cys2295/Cys2307, Cys2302/Cys2316, and Cys2318/Cys2331. Residues 1808 to 1848 form the EGF-like 30; calcium-binding domain; the sequence is DIDECQNGPVCQRNAECINTAGSYRCDCKPGYRFTSTGQCN. Ser1830 is a glycosylation site (O-linked (Glc) serine). The 42-residue stretch at 1849–1890 folds into the EGF-like 31; calcium-binding domain; that stretch reads DRNECQEIPNICSHGQCIDTVGSFYCLCHTGFKTNDDQTMCL. Ser1871 carries O-linked (Glc) serine glycosylation. The EGF-like 32; calcium-binding domain occupies 1891-1929; the sequence is DINECERDACGNGTCRNTIGSFNCRCNHGFILSHNNDCI. Asn1902 carries an N-linked (GlcNAc...) asparagine glycan. O-linked (Glc) serine glycosylation is present at Ser1911. Positions 1930–1972 constitute an EGF-like 33; calcium-binding domain; sequence DVDECASGNGNLCRNGQCINTVGSFQCQCNEGYEVAPDGRTCV. O-linked (Glc) serine glycosylation occurs at Ser1953. Residues 1973–2012 enclose the EGF-like 34; calcium-binding domain; sequence DINECLLEPRKCAPGTCQNLDGSYRCICPPGYSLQNEKCE. The EGF-like 35; calcium-binding domain occupies 2013-2054; it reads DIDECVEEPEICALGTCSNTEGSFKCLCPEGFSLSSSGRRCQ. O-linked (Glc) serine glycosylation occurs at Ser2035. The 53-residue stretch at 2059–2111 folds into the TB 8 domain; sequence SYCYAKFEGGKCSSPKSRNHSKQECCCALKGEGWGDPCELCPTEPDEAFRQIC. Asn2077 carries N-linked (GlcNAc...) asparagine glycosylation. One can recognise an EGF-like 36; calcium-binding domain in the interval 2127–2165; the sequence is DMDECKEPDVCKHGQCINTDGSYRCECPFGYILAGNECV. Residue Ser2148 is glycosylated (O-linked (Glc) serine). Residues 2166–2205 enclose the EGF-like 37; calcium-binding domain; the sequence is DTDECSVGNPCGNGTCKNVIGGFECTCEEGFEPGPMMTCE. An N-linked (GlcNAc...) asparagine glycan is attached at Asn2178. One can recognise an EGF-like 38; calcium-binding domain in the interval 2206 to 2246; the sequence is DINECAQNPLLCAFRCVNTYGSYECKCPVGYVLREDRRMCK. The O-linked (Glc) serine glycan is linked to Ser2227. Positions 2247-2290 constitute an EGF-like 39; calcium-binding domain; sequence DEDECEEGKHDCTEKQMECKNLIGTYMCICGPGYQRRPDGEGCV. An EGF-like 40; calcium-binding domain is found at 2291–2332; it reads DENECQTKPGICENGRCLNTRGSYTCECNDGFTASPNQDECL. Ser2313 carries O-linked (Glc) serine glycosylation. The region spanning 2337 to 2390 is the TB 9 domain; sequence GYCFTEVLQNMCQIGSSNRNPVTKSECCCDGGRGWGPHCEICPFQGTVAFKKLC. In terms of domain architecture, EGF-like 41; calcium-binding spans 2402–2443; the sequence is DIDECKVIHDVCRNGECVNDRGSYHCICKTGYTPDITGTSCV. Intrachain disulfides connect Cys2406-Cys2418, Cys2413-Cys2427, Cys2429-Cys2442, Cys2448-Cys2459, Cys2455-Cys2468, Cys2470-Cys2483, Cys2489-Cys2500, Cys2496-Cys2509, Cys2511-Cys2522, Cys2528-Cys2541, Cys2535-Cys2550, Cys2552-Cys2565, Cys2571-Cys2581, Cys2577-Cys2590, Cys2592-Cys2605, Cys2611-Cys2622, Cys2617-Cys2631, Cys2633-Cys2646, Cys2652-Cys2663, Cys2659-Cys2672, and Cys2674-Cys2686. In terms of domain architecture, EGF-like 42; calcium-binding spans 2444–2484; that stretch reads DLNECNQAPKPCNFICKNTEGSYQCSCPKGYILQEDGRSCK. A glycan (O-linked (Glc) serine) is linked at Ser2465. An EGF-like 43; calcium-binding domain is found at 2485-2523; that stretch reads DLDECATKQHNCQFLCVNTIGGFTCKCPPGFTQHHTSCI. The EGF-like 44; calcium-binding domain occupies 2524–2566; it reads DNNECTSDINLCGSKGICQNTPGSFTCECQRGFSLDQTGSSCE. O-linked (Glc) serine glycosylation occurs at Ser2547. The EGF-like 45; calcium-binding domain occupies 2567–2606; that stretch reads DVDECEGNHRCQHGCQNIIGGYRCSCPQGYLQHYQWNQCV. One can recognise an EGF-like 46; calcium-binding domain in the interval 2607–2647; sequence DENECLSAHICGGASCHNTLGSYKCMCPAGFQYEQFSGGCQ. Ser2628 carries O-linked (Glc) serine glycosylation. The EGF-like 47; calcium-binding domain maps to 2648-2687; it reads DINECGSAQAPCSYGCSNTEGGYLCGCPPGYFRIGQGHCV. Phosphoserine; by FAM20C is present on Ser2702. The residue at position 2709 (Ser2709) is a Phosphoserine. The disordered stretch occupies residues 2726 to 2746; that stretch reads RGRKRRSTNETDASNIEDQSE. Asn2734 is a glycosylation site (N-linked (GlcNAc...) asparagine). Polar residues predominate over residues 2735 to 2746; sequence ETDASNIEDQSE. N-linked (GlcNAc...) asparagine glycosylation is found at Asn2750 and Asn2767.

The protein belongs to the fibrillin family. As to quaternary structure, interacts with COL16A1. Interacts with integrin alpha-V/beta-3. Interacts with ADAMTS10; this interaction promotes microfibril assembly. Interacts with THSD4; this interaction promotes fibril formation. Interacts (via N-terminal domain) with FBLN2 and FBLN5. Interacts with ELN. Forms a ternary complex with ELN and FBLN2 or FBLN5 and a significant interaction with ELN seen only in the presence of FBLN2 or FBLN5. Interacts (via N-terminal domain) with LTBP2 (via C-terminal domain) in a Ca(+2)-dependent manner. Interacts (via N-terminal domain) with LTBP1 (via C-terminal domain). Interacts with integrins ITGA5:ITGB1, ITGAV:ITGB3 and ITGAV:ITGB6. Interacts (via N-terminal domain) with BMP2, BMP4, BMP7, BMP10 and GDF5. Interacts (via N-terminal domain) with MFAP2 and MFAP5. Interacts with ADAMTSL5. Interacts with MFAP4. Interacts (via N-terminal domain) with TNFSF11 in a Ca(+2)-dependent manner. Interacts (via N-terminal domain) with EFEMP2; this interaction inhibits EFEMP2 binding to LOX and ELN. Cleavage of N- and C-terminus by furin is required for incorporation into the extracellular matrix and assembly into microfibrils. The C-terminus, which corresponds to the Asprosin chain, was initially thought to constitute a propeptide. Fibrillin-1 and Asprosin chains are still linked together during the secretion from cells, but are subsequently separated by furin, an essential step for incorporation of Fibrillin-1 into the nascent microfibrils. Post-translationally, forms intermolecular disulfide bonds either with other fibrillin-1 molecules or with other components of the microfibrils. In terms of processing, O-glycosylated on serine residues by POGLUT2 and POGLUT3 which is necessary for efficient protein secretion.

The protein localises to the secreted. It localises to the extracellular space. It is found in the extracellular matrix. Structural component of the 10-12 nm diameter microfibrils of the extracellular matrix, which conveys both structural and regulatory properties to load-bearing connective tissues. Fibrillin-1-containing microfibrils provide long-term force bearing structural support. In tissues such as the lung, blood vessels and skin, microfibrils form the periphery of the elastic fiber, acting as a scaffold for the deposition of elastin. In addition, microfibrils can occur as elastin-independent networks in tissues such as the ciliary zonule, tendon, cornea and glomerulus where they provide tensile strength and have anchoring roles. Fibrillin-1 also plays a key role in tissue homeostasis through specific interactions with growth factors, such as the bone morphogenetic proteins (BMPs), growth and differentiation factors (GDFs) and latent transforming growth factor-beta-binding proteins (LTBPs), cell-surface integrins and other extracellular matrix protein and proteoglycan components. Regulates osteoblast maturation by controlling TGF-beta bioavailability and calibrating TGF-beta and BMP levels, respectively. Negatively regulates osteoclastogenesis by binding and sequestering an osteoclast differentiation and activation factor TNFSF11. This leads to disruption of TNFSF11-induced Ca(2+) signaling and impairment of TNFSF11-mediated nuclear translocation and activation of transcription factor NFATC1 which regulates genes important for osteoclast differentiation and function. Mediates cell adhesion via its binding to cell surface receptors integrins ITGAV:ITGB3 and ITGA5:ITGB1. Binds heparin and this interaction has an important role in the assembly of microfibrils. Functionally, adipokine secreted by white adipose tissue that plays an important regulatory role in the glucose metabolism of liver, muscle and pancreas. Hormone that targets the liver in response to fasting to increase plasma glucose levels. Binds the olfactory receptor OR4M1 at the surface of hepatocytes and promotes hepatocyte glucose release by activating the protein kinase A activity in the liver, resulting in rapid glucose release into the circulation. May act as a regulator of adaptive thermogenesis by inhibiting browning and energy consumption, while increasing lipid deposition in white adipose tissue. Also acts as an orexigenic hormone that increases appetite: crosses the blood brain barrier and exerts effects on the hypothalamus. In the arcuate nucleus of the hypothalamus, asprosin directly activates orexigenic AgRP neurons and indirectly inhibits anorexigenic POMC neurons, resulting in appetite stimulation. Activates orexigenic AgRP neurons via binding to the olfactory receptor OR4M1. May also play a role in sperm motility in testis via interaction with OR4M1 receptor. This is Fibrillin-1 from Homo sapiens (Human).